The primary structure comprises 190 residues: MNNNLQGDAIAAAIDVLNEERVIAYPTEAVFGVGCDPDSETAVMRLLELKLRPVDKGLILIAANYEQLKPYIDDTMLTDAQRETIFSRWPGPVTFVFPAPATTPRWLTGRFDSLAVRVTDHPLVVALCQAYGKPLVSTSANLSGLPPCRTVDEVRAQFGAAFPVVPGETGGRLNPSEIRDALTGELFRQG.

The YrdC-like domain occupies 7–190; sequence GDAIAAAIDV…ALTGELFRQG (184 aa).

Belongs to the SUA5 family. TsaC subfamily.

It localises to the cytoplasm. The enzyme catalyses L-threonine + hydrogencarbonate + ATP = L-threonylcarbamoyladenylate + diphosphate + H2O. Functionally, required for the formation of a threonylcarbamoyl group on adenosine at position 37 (t(6)A37) in tRNAs that read codons beginning with adenine. Catalyzes the conversion of L-threonine, HCO(3)(-)/CO(2) and ATP to give threonylcarbamoyl-AMP (TC-AMP) as the acyladenylate intermediate, with the release of diphosphate. The sequence is that of Threonylcarbamoyl-AMP synthase from Shigella dysenteriae serotype 1 (strain Sd197).